The primary structure comprises 177 residues: Alkyl hydroperoxide reductase AhpD (177 aa).

Cys130 serves as the catalytic Proton donor. Residues Cys130 and Cys133 are joined by a disulfide bond. The Cysteine sulfenic acid (-SOH) intermediate role is filled by Cys133.

This sequence belongs to the AhpD family. As to quaternary structure, homotrimer.

It catalyses the reaction N(6)-[(R)-dihydrolipoyl]-L-lysyl-[lipoyl-carrier protein] + a hydroperoxide = N(6)-[(R)-lipoyl]-L-lysyl-[lipoyl-carrier protein] + an alcohol + H2O. In terms of biological role, antioxidant protein with alkyl hydroperoxidase activity. Required for the reduction of the AhpC active site cysteine residues and for the regeneration of the AhpC enzyme activity. This chain is Alkyl hydroperoxide reductase AhpD, found in Mycolicibacterium smegmatis (strain ATCC 700084 / mc(2)155) (Mycobacterium smegmatis).